Reading from the N-terminus, the 196-residue chain is Rac-like GTP-binding protein RAC9 (196 aa).

Residue 13–20 participates in GTP binding; sequence GDGAVGKT. The Effector region signature appears at 35–43; the sequence is YVPTVFDNF. Residues 60-64 and 118-121 each bind GTP; these read DTAGQ and TKLD. Cys193 carries the cysteine methyl ester modification. Cys193 carries the S-geranylgeranyl cysteine lipid modification. Positions 194–196 are cleaved as a propeptide — removed in mature form; sequence AFL.

This sequence belongs to the small GTPase superfamily. Rho family.

The protein resides in the cytoplasm. It localises to the membrane. Inactive GDP-bound Rho GTPases reside in the cytosol, are found in a complex with Rho GDP-dissociation inhibitors (Rho GDIs), and are released from the GDI protein in order to translocate to membranes upon activation. The protein is Rac-like GTP-binding protein RAC9 (RAC9) of Gossypium hirsutum (Upland cotton).